A 220-amino-acid polypeptide reads, in one-letter code: Ribosomal RNA large subunit methyltransferase E (220 aa).

Residues glycine 60, tryptophan 62, aspartate 92, aspartate 108, and aspartate 133 each contribute to the S-adenosyl-L-methionine site. The active-site Proton acceptor is lysine 173.

It belongs to the class I-like SAM-binding methyltransferase superfamily. RNA methyltransferase RlmE family.

The protein resides in the cytoplasm. It carries out the reaction uridine(2552) in 23S rRNA + S-adenosyl-L-methionine = 2'-O-methyluridine(2552) in 23S rRNA + S-adenosyl-L-homocysteine + H(+). In terms of biological role, specifically methylates the uridine in position 2552 of 23S rRNA at the 2'-O position of the ribose in the fully assembled 50S ribosomal subunit. In Burkholderia thailandensis (strain ATCC 700388 / DSM 13276 / CCUG 48851 / CIP 106301 / E264), this protein is Ribosomal RNA large subunit methyltransferase E.